A 427-amino-acid chain; its full sequence is Adenylosuccinate synthetase (427 aa).

Residues 12–18 (GDEGKGK) and 40–42 (GHT) contribute to the GTP site. Catalysis depends on Asp-13, which acts as the Proton acceptor. Mg(2+)-binding residues include Asp-13 and Gly-40. Residues 13 to 16 (DEGK), 38 to 41 (NAGH), Thr-126, Arg-140, Gln-221, Thr-236, and Arg-299 each bind IMP. His-41 (proton donor) is an active-site residue. 295–301 (STTNRPR) is a binding site for substrate. Residues Arg-301, 327–329 (KLD), and 409–411 (SLG) contribute to the GTP site.

The protein belongs to the adenylosuccinate synthetase family. Homodimer. Requires Mg(2+) as cofactor.

The protein resides in the cytoplasm. It carries out the reaction IMP + L-aspartate + GTP = N(6)-(1,2-dicarboxyethyl)-AMP + GDP + phosphate + 2 H(+). It functions in the pathway purine metabolism; AMP biosynthesis via de novo pathway; AMP from IMP: step 1/2. Its function is as follows. Plays an important role in the de novo pathway of purine nucleotide biosynthesis. Catalyzes the first committed step in the biosynthesis of AMP from IMP. The chain is Adenylosuccinate synthetase from Borrelia turicatae (strain 91E135).